The sequence spans 212 residues: MADTITDAVSRAIDEAPTRNFRETVDLAVNLRDLDLNDPSNRVDESVVLPAGTGQETQIVVFASGETALRAEDVADQVLSGDELEELGDDDDAAKDLADEIDFFVAEAGMMQDIGRFLGTILGPRGKMPTPLQPDDDVVETVNRMQNTVQIRSRERRTFHTRVGAQDMDSEEIADNVDVIIRRLEATLEKGPLNIDSMYVKTTMGPAVEVPA.

It belongs to the universal ribosomal protein uL1 family. Part of the 50S ribosomal subunit.

Its function is as follows. Binds directly to 23S rRNA. Probably involved in E site tRNA release. In terms of biological role, protein L1 is also a translational repressor protein, it controls the translation of its operon by binding to its mRNA. The protein is Large ribosomal subunit protein uL1 of Haloquadratum walsbyi (strain DSM 16790 / HBSQ001).